A 48-amino-acid polypeptide reads, in one-letter code: Small, acid-soluble spore protein G (48 aa).

The segment covering 1-16 (MSENRHENEENRRDAA) has biased composition (basic and acidic residues). Positions 1–48 (MSENRHENEENRRDAAVAKVQNSGNAKVVVSVNTDQDQAQAQSQDGED) are disordered. The span at 35–48 (DQDQAQAQSQDGED) shows a compositional bias: low complexity.

The polypeptide is Small, acid-soluble spore protein G (sspG) (Bacillus subtilis (strain 168)).